Here is a 91-residue protein sequence, read N- to C-terminus: Bacterial microcompartment shell protein PduJ (91 aa).

A BMC domain is found at alanine 4–proline 88.

It belongs to the bacterial microcompartments protein family. As to quaternary structure, homohexamer with a central pore. Interacts with PduP, which targets PduP to the BMC. Interacts with shell protein PduA.

Its subcellular location is the bacterial microcompartment. It participates in polyol metabolism; 1,2-propanediol degradation. One of the major shell proteins of the bacterial microcompartment (BMC) dedicated to 1,2-propanediol (1,2-PD) degradation. At least one of PduA or PduJ is required for BMC assembly; it must be encoded as the first gene in the pdu operon. Required for structural integrity of BMCs and to mitigate propionaldehyde toxicity, probably joins facets responsible for BMC closure. Probably the hub for binding multiple enzymes to the interior of the BMC. Its function is as follows. Expression of a cosmid containing the full 21-gene pdu operon in E.coli allows E.coli to grow on 1,2-PD with the appearance of BMCs in its cytoplasm. Overexpression of this protein leads to an internal structure with a whorled architecture. In terms of biological role, the 1,2-PD-specific bacterial microcompartment (BMC) concentrates low levels of 1,2-PD catabolic enzymes, concentrates volatile reaction intermediates thus enhancing pathway flux and keeps the level of toxic, mutagenic propionaldehyde low. The sequence is that of Bacterial microcompartment shell protein PduJ from Citrobacter freundii.